We begin with the raw amino-acid sequence, 346 residues long: Methylthioribose-1-phosphate isomerase (346 aa).

Residues 46 to 48, arginine 89, and glutamine 196 contribute to the substrate site; that span reads RGA. Aspartate 237 serves as the catalytic Proton donor. 247-248 lines the substrate pocket; it reads NK.

This sequence belongs to the eIF-2B alpha/beta/delta subunits family. MtnA subfamily.

It carries out the reaction 5-(methylsulfanyl)-alpha-D-ribose 1-phosphate = 5-(methylsulfanyl)-D-ribulose 1-phosphate. It participates in amino-acid biosynthesis; L-methionine biosynthesis via salvage pathway; L-methionine from S-methyl-5-thio-alpha-D-ribose 1-phosphate: step 1/6. Catalyzes the interconversion of methylthioribose-1-phosphate (MTR-1-P) into methylthioribulose-1-phosphate (MTRu-1-P). In Geobacter metallireducens (strain ATCC 53774 / DSM 7210 / GS-15), this protein is Methylthioribose-1-phosphate isomerase.